The primary structure comprises 154 residues: 6,7-dimethyl-8-ribityllumazine synthase (154 aa).

5-amino-6-(D-ribitylamino)uracil-binding positions include Trp-22, 56 to 58 (AWE), and 80 to 82 (CVI). Residue 85–86 (DT) participates in (2S)-2-hydroxy-3-oxobutyl phosphate binding. The Proton donor role is filled by His-88. Asn-113 lines the 5-amino-6-(D-ribitylamino)uracil pocket. (2S)-2-hydroxy-3-oxobutyl phosphate is bound at residue Arg-127.

It belongs to the DMRL synthase family. Forms an icosahedral capsid composed of 60 subunits, arranged as a dodecamer of pentamers.

The enzyme catalyses (2S)-2-hydroxy-3-oxobutyl phosphate + 5-amino-6-(D-ribitylamino)uracil = 6,7-dimethyl-8-(1-D-ribityl)lumazine + phosphate + 2 H2O + H(+). It functions in the pathway cofactor biosynthesis; riboflavin biosynthesis; riboflavin from 2-hydroxy-3-oxobutyl phosphate and 5-amino-6-(D-ribitylamino)uracil: step 1/2. Catalyzes the formation of 6,7-dimethyl-8-ribityllumazine by condensation of 5-amino-6-(D-ribitylamino)uracil with 3,4-dihydroxy-2-butanone 4-phosphate. This is the penultimate step in the biosynthesis of riboflavin. This chain is 6,7-dimethyl-8-ribityllumazine synthase, found in Xanthomonas oryzae pv. oryzae (strain MAFF 311018).